Reading from the N-terminus, the 249-residue chain is Inhibitor of growth protein 4 (249 aa).

Positions 25 to 118 form a coiled coil; that stretch reads FQLMRDLDQR…ADLKEKQIES (94 aa). Residues 115-160 are disordered; that stretch reads QIESSDYDSSSSKGKKKGRAQKEKKAARARSKGKNSDEEAPKTAQK. The PHD-type zinc finger occupies 196-245; sequence PTYCLCHQVSYGEMIGCDNPDCSIEWFHFACVGLTTKPRGKWFCPRCSQE. Residues cysteine 199, cysteine 201, cysteine 212, cysteine 217, histidine 223, cysteine 226, cysteine 239, and cysteine 242 each contribute to the Zn(2+) site.

The protein belongs to the ING family. In terms of assembly, homodimer. Component of the HBO1 complex.

It localises to the nucleus. Its function is as follows. Component of HBO1 complexes, which specifically mediate acetylation of histone H3 at 'Lys-14' (H3K14ac), and have reduced activity toward histone H4. Through chromatin acetylation it may function in DNA replication. This chain is Inhibitor of growth protein 4 (ING4), found in Gallus gallus (Chicken).